Here is a 218-residue protein sequence, read N- to C-terminus: Adenylate kinase (218 aa).

10 to 15 (GAGKGT) contributes to the ATP binding site. Residues 30 to 59 (STGDMLRAAVKAGTPLGIAAKKIMDEGGLV) are NMP. AMP contacts are provided by residues Thr-31, Arg-36, 57–59 (GLV), 85–88 (GFPR), and Gln-92. An LID region spans residues 122 to 159 (GRRVHPASGRTYHVKFNPPKVAGKDDLTGEELIQRDDD). Residues Arg-123 and 132–133 (TY) each bind ATP. The AMP site is built by Arg-156 and Arg-167. ATP is bound at residue Gly-203.

This sequence belongs to the adenylate kinase family. In terms of assembly, monomer.

The protein localises to the cytoplasm. The catalysed reaction is AMP + ATP = 2 ADP. It functions in the pathway purine metabolism; AMP biosynthesis via salvage pathway; AMP from ADP: step 1/1. In terms of biological role, catalyzes the reversible transfer of the terminal phosphate group between ATP and AMP. Plays an important role in cellular energy homeostasis and in adenine nucleotide metabolism. The sequence is that of Adenylate kinase from Janthinobacterium sp. (strain Marseille) (Minibacterium massiliensis).